Reading from the N-terminus, the 672-residue chain is Rho GTPase-activating protein 40 (672 aa).

Residues 43–68 (GCSPGLSTGPTNLQQHPQKPRPADCS) form a disordered region. Over residues 47-59 (GLSTGPTNLQQHP) the composition is skewed to polar residues. Residues 321-519 (VPLHSLLEAD…MMVQYQDLLW (199 aa)) enclose the Rho-GAP domain.

Its function is as follows. GTPase activator for the Rho-type GTPases by converting them to an inactive GDP-bound state. The chain is Rho GTPase-activating protein 40 from Mus musculus (Mouse).